A 239-amino-acid chain; its full sequence is Mediator of RNA polymerase II transcription subunit 7 (239 aa).

Disordered stretches follow at residues 1–21 and 43–66; these read MSSLPQEAALPITNTLFPPPP and LFVNDEKGKTKGKEKKSDDRDMSV. A compositionally biased stretch (basic and acidic residues) spans 46-66; that stretch reads NDEKGKTKGKEKKSDDRDMSV.

It belongs to the Mediator complex subunit 7 family. As to quaternary structure, component of the Mediator complex.

Its subcellular location is the nucleus. Component of the Mediator complex, a coactivator involved in the regulated transcription of nearly all RNA polymerase II-dependent genes. Mediator functions as a bridge to convey information from gene-specific regulatory proteins to the basal RNA polymerase II transcription machinery. Mediator is recruited to promoters by direct interactions with regulatory proteins and serves as a scaffold for the assembly of a functional preinitiation complex with RNA polymerase II and the general transcription factors. The chain is Mediator of RNA polymerase II transcription subunit 7 (MED7) from Cryptococcus neoformans var. neoformans serotype D (strain B-3501A) (Filobasidiella neoformans).